Here is a 150-residue protein sequence, read N- to C-terminus: D-aminoacyl-tRNA deacylase (150 aa).

The Gly-cisPro motif, important for rejection of L-amino acids motif lies at 138–139; it reads GP.

This sequence belongs to the DTD family. In terms of assembly, homodimer.

It localises to the cytoplasm. It carries out the reaction glycyl-tRNA(Ala) + H2O = tRNA(Ala) + glycine + H(+). The enzyme catalyses a D-aminoacyl-tRNA + H2O = a tRNA + a D-alpha-amino acid + H(+). Functionally, an aminoacyl-tRNA editing enzyme that deacylates mischarged D-aminoacyl-tRNAs. Also deacylates mischarged glycyl-tRNA(Ala), protecting cells against glycine mischarging by AlaRS. Acts via tRNA-based rather than protein-based catalysis; rejects L-amino acids rather than detecting D-amino acids in the active site. By recycling D-aminoacyl-tRNA to D-amino acids and free tRNA molecules, this enzyme counteracts the toxicity associated with the formation of D-aminoacyl-tRNA entities in vivo and helps enforce protein L-homochirality. The sequence is that of D-aminoacyl-tRNA deacylase from Parabacteroides distasonis (strain ATCC 8503 / DSM 20701 / CIP 104284 / JCM 5825 / NCTC 11152).